Here is a 364-residue protein sequence, read N- to C-terminus: DNA replication and repair protein RecF (364 aa).

ATP is bound at residue 30 to 37 (GNNAQGKT).

It belongs to the RecF family.

The protein resides in the cytoplasm. Its function is as follows. The RecF protein is involved in DNA metabolism; it is required for DNA replication and normal SOS inducibility. RecF binds preferentially to single-stranded, linear DNA. It also seems to bind ATP. This Clostridium botulinum (strain Langeland / NCTC 10281 / Type F) protein is DNA replication and repair protein RecF.